The following is a 38-amino-acid chain: Alpha-amylase (38 aa).

This sequence belongs to the glycosyl hydrolase 13 family. In terms of assembly, monomer. Requires Ca(2+) as cofactor. Chloride is required as a cofactor. In terms of tissue distribution, expressed by the venom gland.

The protein localises to the secreted. The enzyme catalyses Endohydrolysis of (1-&gt;4)-alpha-D-glucosidic linkages in polysaccharides containing three or more (1-&gt;4)-alpha-linked D-glucose units.. In Tityus serrulatus (Brazilian scorpion), this protein is Alpha-amylase.